The primary structure comprises 285 residues: Inositol polyphosphate 1-phosphatase (285 aa).

4 residues coordinate Mg(2+): Glu68, Asp106, Leu108, and Asp109. 1D-myo-inositol 1,4-bisphosphate-binding residues include Asp109, Gly110, Thr111, Ser173, Gly195, Ser197, and Lys200. Asp223 is a binding site for Mg(2+).

It belongs to the inositol monophosphatase superfamily. In terms of assembly, monomer. Mg(2+) is required as a cofactor.

It localises to the cytoplasm. It carries out the reaction 1D-myo-inositol 1,4-bisphosphate + H2O = 1D-myo-inositol 4-phosphate + phosphate. The catalysed reaction is adenosine 3',5'-bisphosphate + H2O = AMP + phosphate. With respect to regulation, partially inhibited by Li(2+). Its function is as follows. Catalyzes the hydrolysis of the 1-position phosphate from inositol 1,4-bisphosphate. Is also able to convert 3'(2')-phosphoadenosine 5'-phosphate (PAP) to AMP but with less efficiency. This is Inositol polyphosphate 1-phosphatase from Entamoeba histolytica (strain ATCC 30459 / HM-1:IMSS / ABRM).